The chain runs to 393 residues: Arginine biosynthesis bifunctional protein ArgJ (393 aa).

Threonine 143, lysine 168, threonine 179, glutamate 265, asparagine 388, and threonine 393 together coordinate substrate. The active-site Nucleophile is threonine 179.

This sequence belongs to the ArgJ family. Heterotetramer of two alpha and two beta chains.

The protein localises to the cytoplasm. It catalyses the reaction N(2)-acetyl-L-ornithine + L-glutamate = N-acetyl-L-glutamate + L-ornithine. The enzyme catalyses L-glutamate + acetyl-CoA = N-acetyl-L-glutamate + CoA + H(+). Its pathway is amino-acid biosynthesis; L-arginine biosynthesis; L-ornithine and N-acetyl-L-glutamate from L-glutamate and N(2)-acetyl-L-ornithine (cyclic): step 1/1. It functions in the pathway amino-acid biosynthesis; L-arginine biosynthesis; N(2)-acetyl-L-ornithine from L-glutamate: step 1/4. Its function is as follows. Catalyzes two activities which are involved in the cyclic version of arginine biosynthesis: the synthesis of N-acetylglutamate from glutamate and acetyl-CoA as the acetyl donor, and of ornithine by transacetylation between N(2)-acetylornithine and glutamate. The sequence is that of Arginine biosynthesis bifunctional protein ArgJ from Syntrophotalea carbinolica (strain DSM 2380 / NBRC 103641 / GraBd1) (Pelobacter carbinolicus).